Consider the following 1496-residue polypeptide: DNA-directed RNA polymerase subunit beta' (1496 aa).

Residues C70, C72, C85, and C88 each coordinate Zn(2+). Residues D461, D463, and D465 each coordinate Mg(2+). 4 residues coordinate Zn(2+): C908, C982, C989, and C992. The tract at residues 1467–1496 (DKDMQVEGESEVPAIPPVAEGSAPEAPPAE) is disordered.

This sequence belongs to the RNA polymerase beta' chain family. The RNAP catalytic core consists of 2 alpha, 1 beta, 1 beta' and 1 omega subunit. When a sigma factor is associated with the core the holoenzyme is formed, which can initiate transcription. The cofactor is Mg(2+). Requires Zn(2+) as cofactor.

It carries out the reaction RNA(n) + a ribonucleoside 5'-triphosphate = RNA(n+1) + diphosphate. In terms of biological role, DNA-dependent RNA polymerase catalyzes the transcription of DNA into RNA using the four ribonucleoside triphosphates as substrates. This Paramagnetospirillum magneticum (strain ATCC 700264 / AMB-1) (Magnetospirillum magneticum) protein is DNA-directed RNA polymerase subunit beta'.